The chain runs to 434 residues: Glutamyl-tRNA reductase (434 aa).

Residues 49–52 (TCNR), Ser107, 112–114 (EPQ), and Gln118 each bind substrate. Cys50 (nucleophile) is an active-site residue. Residue 187 to 192 (GAGETV) coordinates NADP(+).

This sequence belongs to the glutamyl-tRNA reductase family. Homodimer.

The enzyme catalyses (S)-4-amino-5-oxopentanoate + tRNA(Glu) + NADP(+) = L-glutamyl-tRNA(Glu) + NADPH + H(+). It functions in the pathway porphyrin-containing compound metabolism; protoporphyrin-IX biosynthesis; 5-aminolevulinate from L-glutamyl-tRNA(Glu): step 1/2. Its function is as follows. Catalyzes the NADPH-dependent reduction of glutamyl-tRNA(Glu) to glutamate 1-semialdehyde (GSA). This Hydrogenovibrio crunogenus (strain DSM 25203 / XCL-2) (Thiomicrospira crunogena) protein is Glutamyl-tRNA reductase.